The chain runs to 59 residues: Large ribosomal subunit protein uL30 (59 aa).

Belongs to the universal ribosomal protein uL30 family. In terms of assembly, part of the 50S ribosomal subunit.

This chain is Large ribosomal subunit protein uL30, found in Escherichia coli (strain UTI89 / UPEC).